The chain runs to 43 residues: Metallothionein-3 (43 aa).

The protein belongs to the metallothionein superfamily. Type 5 family.

Functionally, this protein binds cations of several transition elements. Thought to be involved in metal ion homeostasis. This is Metallothionein-3 (MtnC) from Drosophila melanogaster (Fruit fly).